The sequence spans 509 residues: Group 3 secretory phospholipase A2 (509 aa).

A signal peptide spans 1 to 19; the sequence is MGVQAGLFGMLGFLGVALG. Residues 123–149 are disordered; it reads ESPAGARKKRAAGQSGVPGGGHQREKR. Positions 150–291 are phospholipase A2-like; that stretch reads GWTMPGTLWC…SWSSRATSPT (142 aa). 3 residues coordinate Ca(2+): Trp158, Gly160, and Gly162. Intrachain disulfides connect Cys159–Cys181, Cys180–Cys220, Cys187–Cys213, and Cys211–Cys244. The N-linked (GlcNAc...) asparagine glycan is linked to Asn167. His184 is an active-site residue. Position 185 (Asp185) interacts with Ca(2+). The active site involves Asp214. A glycan (N-linked (GlcNAc...) asparagine) is linked at Asn280. The tract at residues 283–354 is disordered; that stretch reads WSSRATSPTP…LQGPQGGLKP (72 aa). The span at 284–296 shows a compositional bias: low complexity; it reads SSRATSPTPSSRS. Over residues 302-322 the composition is skewed to basic residues; it reads PRQKQHLRKGPPHQKGSKRPS. N-linked (GlcNAc...) asparagine glycosylation is found at Asn325, Asn396, and Asn439. The interval 458 to 482 is disordered; sequence QQRRHQLQDKGTDERQPWPSEPLRG. Basic and acidic residues predominate over residues 463–473; that stretch reads QLQDKGTDERQ.

The protein belongs to the phospholipase A2 family. It depends on Ca(2+) as a cofactor. N-glycosylation does not affect the catalytic activity, but is required for proper secretion. A nonglycosylated form is observed in several cell types. In terms of processing, in several cell types, the N- and C-termini are cleaved off. Expressed in kidney, heart, liver, and skeletal muscle. Also present in placenta and peripheral blood leukocytes. Not detected in colon, thymus, spleen and small intestine. In lung, expressed in bronchial epithelial cells and alveolar macrophages, but scarcely detected in alveolar epithelium, arterial walls and interstitial fibroblasts (at protein level). In joints of osteoarthritis and rheumatoid arthritis, expressed in endothelial cells (at protein level). In normal heart, detected in some vessels. In myocardial tissues with acute infarction, expressed in vascular endothelial cells adjacent to cardiomyocytes and those in lesions with granulation. Expression in cardiomyocytes is scarce (at protein level). In uterus, breast and colon cancers, detected in tumor cells and neighboring microvascular endothelium, but not in normal glandular tissues (at protein level). Expressed in dermal resting mast cells (at protein level) and pulmonary mast cells. Expressed in neuronal fibers (at protein level). Highly expressed in dorsal root ganglia neurons (at protein level). Expressed in Purkinje cells in cerebellum (at protein level). In stomach is preferentially expressed in neuronal fibers and in microvascular endothelium. Sparsely expressed in normal aorta (at protein level). Highly expressed in macrophages and smooth muscle cells in aorta with atheroma.

The protein resides in the secreted. It is found in the cell membrane. Its subcellular location is the cytoplasm. The protein localises to the cytoskeleton. It localises to the microtubule organizing center. The protein resides in the centrosome. It is found in the centriole. Its subcellular location is the recycling endosome. The catalysed reaction is a 1,2-diacyl-sn-glycero-3-phosphocholine + H2O = a 1-acyl-sn-glycero-3-phosphocholine + a fatty acid + H(+). It carries out the reaction 1-hexadecanoyl-2-(9Z,12Z-octadecadienoyl)-sn-glycero-3-phosphocholine + H2O = (9Z,12Z)-octadecadienoate + 1-hexadecanoyl-sn-glycero-3-phosphocholine + H(+). It catalyses the reaction 1-hexadecanoyl-2-(5Z,8Z,11Z,14Z-eicosatetraenoyl)-sn-glycero-3-phosphocholine + H2O = 1-hexadecanoyl-sn-glycero-3-phosphocholine + (5Z,8Z,11Z,14Z)-eicosatetraenoate + H(+). The enzyme catalyses 1-hexadecanoyl-2-(9Z,12Z-octadecadienoyl)-sn-glycero-3-phosphoethanolamine + H2O = 1-hexadecanoyl-sn-glycero-3-phosphoethanolamine + (9Z,12Z)-octadecadienoate + H(+). The catalysed reaction is 1-hexadecanoyl-2-(5Z,8Z,11Z,14Z-eicosatetraenoyl)-sn-glycero-3-phosphoethanolamine + H2O = 1-hexadecanoyl-sn-glycero-3-phosphoethanolamine + (5Z,8Z,11Z,14Z)-eicosatetraenoate + H(+). Its activity is regulated as follows. Arachidonic acid release is markedly increased by glypican, a glycosylphosphatidylinositol-anchored heparan sulfate proteoglycan. In terms of biological role, secretory calcium-dependent phospholipase A2 that primarily targets extracellular phospholipids. Hydrolyzes the ester bond of the fatty acyl group attached at sn-2 position of phospholipids without apparent head group selectivity. Contributes to phospholipid remodeling of low-density lipoprotein (LDL) and high-density lipoprotein (HDL) particles. Hydrolyzes LDL phospholipids releasing unsaturated fatty acids that regulate macrophage differentiation toward foam cells. May act in an autocrine and paracrine manner. Secreted by immature mast cells, acts on nearby fibroblasts upstream to PTDGS to synthesize prostaglandin D2 (PGD2), which in turn promotes mast cell maturation and degranulation via PTGDR. Secreted by epididymal epithelium, acts on immature sperm cells within the duct, modulating the degree of unsaturation of the fatty acyl components of phosphatidylcholines required for acrosome assembly and sperm cell motility. Facilitates the replacement of fatty acyl chains in phosphatidylcholines in sperm membranes from omega-6 and omega-9 to omega-3 polyunsaturated fatty acids (PUFAs). Coupled to lipoxygenase pathway, may process omega-6 PUFAs to generate oxygenated lipid mediators in the male reproductive tract. At pericentrosomal preciliary compartment, negatively regulates ciliogenesis likely by regulating endocytotic recycling of ciliary membrane protein. Coupled to cyclooxygenase pathway provides arachidonate to generate prostaglandin E2 (PGE2), a potent immunomodulatory lipid in inflammation and tumorigenesis. At colonic epithelial barrier, preferentially hydrolyzes phospholipids having arachidonate and docosahexaenoate at sn-2 position, contributing to the generation of oxygenated metabolites involved in colonic stem cell homeostasis. Releases C16:0 and C18:0 lysophosphatidylcholine subclasses from neuron plasma membranes and promotes neurite outgrowth and neuron survival. The sequence is that of Group 3 secretory phospholipase A2 from Homo sapiens (Human).